The sequence spans 436 residues: GTPase Der (436 aa).

2 EngA-type G domains span residues 4–167 (PTVA…PVEE) and 175–351 (IRFS…ESQN). GTP is bound by residues 10–17 (GRPNVGKS), 57–61 (DTGGI), 119–122 (NKVD), 181–188 (GRPNVGKS), 229–233 (DTAGM), and 294–297 (NKWD). The KH-like domain occupies 352–436 (KRIPSAVLND…PIHLIARKRK (85 aa)).

It belongs to the TRAFAC class TrmE-Era-EngA-EngB-Septin-like GTPase superfamily. EngA (Der) GTPase family. As to quaternary structure, associates with the 50S ribosomal subunit.

GTPase that plays an essential role in the late steps of ribosome biogenesis. This chain is GTPase Der, found in Streptococcus pyogenes serotype M5 (strain Manfredo).